The primary structure comprises 1010 residues: Pre-mRNA-splicing factor cwc22 (1010 aa).

The segment covering 1–10 (MASADMSPSR) has biased composition (polar residues). A disordered region spans residues 1 to 166 (MASADMSPSR…RTPTPPPVAV (166 aa)). Residues 18–28 (RSPSPRTQSPS) are compositionally biased toward low complexity. 2 stretches are compositionally biased toward basic and acidic residues: residues 29-39 (PRDEDGSRSPG) and 65-78 (PRRDRSLSPRDQPH). Over residues 84–109 (RSPTPRSQSPSRRSVRSPSPRQGSPA) the composition is skewed to low complexity. Residues 142-158 (RHRDAGGDYRPVRKERT) are compositionally biased toward basic and acidic residues. Positions 222 to 405 (KKSVNGLVNK…EVLFQVRKDK (184 aa)) constitute an MIF4G domain. A disordered region spans residues 466–498 (GEASDDDEDDDDDDESESGSESEDEEQKALEIK). Residues 468 to 491 (ASDDDEDDDDDDESESGSESEDEE) are compositionally biased toward acidic residues. Residues 507-623 (NLRRTIYLSI…GWHVFSVIHL (117 aa)) enclose the MI domain. The tract at residues 708–1010 (LPAPPADSDS…SPVAKRGRVD (303 aa)) is disordered. A compositionally biased stretch (low complexity) spans 718–732 (ESVSSYSSYSSYSSR). A compositionally biased stretch (basic residues) spans 753–775 (PPRRGRGRSYSRTPSRSRSRSRS). The span at 776–787 (YSRSVSKSVSRS) shows a compositional bias: low complexity. Basic residues-rich tracts occupy residues 834–846 (RRGRSGTRSRSRS) and 899–910 (RLRRGSYSRSRS). The span at 911-935 (RSPIPIRGNGPAGRDTGRAGPAPAR) shows a compositional bias: low complexity. A compositionally biased stretch (basic residues) spans 936-948 (GGRRNRSYSRSRT). Positions 961 to 973 (SRRVVSRSPSPVV) are enriched in low complexity. Residues 976-1010 (NKRRRSYSSSRSRSRSSSRSRYRSRSPVAKRGRVD) show a composition bias toward basic residues.

The protein belongs to the CWC22 family. As to quaternary structure, associated with the spliceosome.

It localises to the cytoplasm. Its subcellular location is the nucleus. In terms of biological role, involved in pre-mRNA splicing. This chain is Pre-mRNA-splicing factor cwc22 (msp-1), found in Neurospora crassa (strain ATCC 24698 / 74-OR23-1A / CBS 708.71 / DSM 1257 / FGSC 987).